The sequence spans 467 residues: Matrix metalloproteinase-18 (467 aa).

The N-terminal stretch at 1–17 (MNSLLLKLLLCVAITAA) is a signal peptide. Residues 18 to 99 (FPADKQDEPP…PRCGVYDVGQ (82 aa)) constitute a propeptide that is removed on maturation. Positions 90 to 97 (PRCGVYDV) match the Cysteine switch motif. Positions 92 and 218 each coordinate Zn(2+). The active site involves Glu-219. The Zn(2+) site is built by His-222 and His-228. Hemopexin repeat units lie at residues 277–326 (PSRC…WPSL), 327–373 (PTNI…GFPK), 375–423 (VKRI…FPGI), and 424–467 (PDKI…WLGC). A disulfide bridge connects residues Cys-280 and Cys-467.

This sequence belongs to the peptidase M10A family. Zn(2+) serves as cofactor. Requires Ca(2+) as cofactor. In terms of tissue distribution, expressed only transiently in whole animal, at time when tadpole feeding begins.

It is found in the secreted. It localises to the extracellular space. The protein localises to the extracellular matrix. Its activity is regulated as follows. Up-regulated in the tail by thyroid hormone. Functionally, cleaves collagen type I. May play a role in larval tissue degeneration and adult organogenesis during amphibian metamorphosis. May be involved in tail resorption. The chain is Matrix metalloproteinase-18 (mmp18) from Xenopus laevis (African clawed frog).